Reading from the N-terminus, the 1079-residue chain is DNA-directed RNA polymerase subunit beta (1079 aa).

The disordered stretch occupies residues 963–982 (RSTGPYSRVTQQPVKGRARR). The span at 966-975 (GPYSRVTQQP) shows a compositional bias: polar residues.

It belongs to the RNA polymerase beta chain family. As to quaternary structure, in plastids the minimal PEP RNA polymerase catalytic core is composed of four subunits: alpha, beta, beta', and beta''. When a (nuclear-encoded) sigma factor is associated with the core the holoenzyme is formed, which can initiate transcription.

It localises to the plastid. The protein resides in the chloroplast. The catalysed reaction is RNA(n) + a ribonucleoside 5'-triphosphate = RNA(n+1) + diphosphate. Functionally, DNA-dependent RNA polymerase catalyzes the transcription of DNA into RNA using the four ribonucleoside triphosphates as substrates. This is DNA-directed RNA polymerase subunit beta from Pelargonium hortorum (Common geranium).